The sequence spans 333 residues: NADH-quinone oxidoreductase subunit H (333 aa).

Helical transmembrane passes span 15–35, 88–108, 117–137, 159–179, 191–211, 250–270, 273–293, and 313–333; these read LVIFFGLGLALLFAVLAFVTY, FILAPIIAFAPAFMVLATLPF, IGVGLLYYIAVSGLTTIGVVA, ISYEIPLVVSVLGVVLLTGSL, VWYIFIQPIAFIVFFIAAVAE, LFAMAALTTILFLGGWHPVMF, FIPGAVWFALKFSIVVFVLIW, and VLFPVALLNIFVTALIQELFF.

This sequence belongs to the complex I subunit 1 family. As to quaternary structure, NDH-1 is composed of 14 different subunits. Subunits NuoA, H, J, K, L, M, N constitute the membrane sector of the complex.

The protein localises to the cell membrane. It carries out the reaction a quinone + NADH + 5 H(+)(in) = a quinol + NAD(+) + 4 H(+)(out). In terms of biological role, NDH-1 shuttles electrons from NADH, via FMN and iron-sulfur (Fe-S) centers, to quinones in the respiratory chain. The immediate electron acceptor for the enzyme in this species is believed to be ubiquinone. Couples the redox reaction to proton translocation (for every two electrons transferred, four hydrogen ions are translocated across the cytoplasmic membrane), and thus conserves the redox energy in a proton gradient. This subunit may bind ubiquinone. This chain is NADH-quinone oxidoreductase subunit H, found in Geobacillus sp. (strain WCH70).